Consider the following 232-residue polypeptide: Probable phospholipid hydroperoxide glutathione peroxidase 6, mitochondrial (232 aa).

The transit peptide at Met-1–Gly-54 directs the protein to the mitochondrion. Residue Cys-105 is part of the active site.

The protein belongs to the glutathione peroxidase family. Expressed at a low but detectable level in leaves, stems, and flowers, but at a higher level in siliques and even higher in roots. Predominantly expressed in seeds.

Its subcellular location is the mitochondrion. The enzyme catalyses a hydroperoxy polyunsaturated fatty acid + 2 glutathione = a hydroxy polyunsaturated fatty acid + glutathione disulfide + H2O. Functionally, protects cells and enzymes from oxidative damage, by catalyzing the reduction of hydrogen peroxide, lipid peroxides and organic hydroperoxide, by glutathione. This chain is Probable phospholipid hydroperoxide glutathione peroxidase 6, mitochondrial (GPX6), found in Arabidopsis thaliana (Mouse-ear cress).